The chain runs to 1078 residues: A type blood alpha-D-galactosamine galactosaminidase (1078 aa).

The signal sequence occupies residues 1–26; that stretch reads MRGKKFISLTLSTMLCLQLLPTASFA. Residues 306–570 form a glycoside hydrolase 36 domain region; that stretch reads PDSSYDLRWE…NNIWYPSAVG (265 aa). Residue D463 is the Nucleophile of the active site. D532 is a catalytic residue. Positions 699 to 1078 are not required for activity on soluble substrates; the sequence is PDPEPVDPDY…LDYLTYTTNA (380 aa).

It belongs to the glycosyl hydrolase 36 family.

The enzyme catalyses an alpha-D-galactosaminyl-(1-&gt;3)-[alpha-L-fucosyl-(1-&gt;2)]-beta-D-galactosyl derivative + H2O = D-galactosamine + an alpha-L-fucosyl-(1-&gt;2)-beta-D-galactosyl derivative. Its function is as follows. One of an enzyme pair that work together to convert the A antigen to the H antigen of the O blood type, which together release galactosamine. Catalyzes the second step in the conversion, acts on the product of the first reaction (FpGalNAcDeAc, AC P0DTR4). Is specific for galactosamine containing sugars, does not cleave GalNAc residues. The chain is A type blood alpha-D-galactosamine galactosaminidase from Flavonifractor plautii (Fusobacterium plautii).